The following is a 540-amino-acid chain: Solute carrier family 22 member 7 (540 aa).

12 helical membrane-spanning segments follow: residues 21–41, 144–164, 172–192, 202–222, 232–252, 257–277, 344–364, 378–398, 402–422, 429–449, 462–484, and 488–510; these read LVLL…PIFM, VTST…GYLS, LLLV…ASVN, LTGS…LEWL, VIST…GYLI, WLLL…WWVP, VSLC…GLTL, LLFG…VRLV, LTEA…LLVS, ITAL…TAYL, TGMG…VVLL, and WLLL…VLLL.

It belongs to the major facilitator (TC 2.A.1) superfamily. Organic cation transporter (TC 2.A.1.19) family. Abundant expression in male and female kidney. In kidney, expressed at the brush border of the proximal tubule S3 segment (S3) in the outer stripe and medullary rays. In kidney, expression is higher in female than male. Also expressed in female liver.

It is found in the basolateral cell membrane. The protein resides in the apical cell membrane. The protein localises to the cell membrane. The catalysed reaction is orotate(out) + L-glutamate(in) = orotate(in) + L-glutamate(out). The enzyme catalyses 3',5'-cyclic GMP(in) = 3',5'-cyclic GMP(out). It catalyses the reaction GMP(in) = GMP(out). It carries out the reaction 2'-deoxyguanosine(in) = 2'-deoxyguanosine(out). The catalysed reaction is GDP(in) = GDP(out). The enzyme catalyses guanosine(in) = guanosine(out). It catalyses the reaction GTP(in) = GTP(out). It carries out the reaction 3',5'-cyclic AMP(in) = 3',5'-cyclic AMP(out). The catalysed reaction is creatinine(in) = creatinine(out). The enzyme catalyses prostaglandin E2(out) = prostaglandin E2(in). It catalyses the reaction 2-oxoglutarate(in) = 2-oxoglutarate(out). It carries out the reaction glutarate(in) = glutarate(out). The catalysed reaction is urate(out) = urate(in). The enzyme catalyses estrone 3-sulfate(out) = estrone 3-sulfate(in). Functions as a Na(+)-independent bidirectional multispecific transporter. Contributes to the renal and hepatic elimination of endogenous organic compounds from the systemic circulation into the urine and bile, respectively. Capable of transporting a wide range of purine and pyrimidine nucleobases, nucleosides, and nucleotides with cGMP, 2'deoxyguanosine and GMP being the preferred substrates. Functions as a pH- and chloride-independent cGMP bidirectional facilitative transporter that can regulate both intracellular and extracellular levels of cGMP and may be involved in cGMP signaling pathways. Mediates orotate/glutamate bidirectional exchange and most likely display a physiological role in hepatic release of glutamate into the blood. Involved in renal secretion and possible reabsorption of creatinine. Able to uptake prostaglandin E2 (PGE2) and may contribute to PGE2 renal excretion. Also transports alpha-ketoglutarate and urate. Unlike human hortolog, able to transport glutarate. Apart from the orotate/glutamate exchange, the counterions for the uptake of other SLC22A7/OAT2 substrates remain to be identified. The protein is Solute carrier family 22 member 7 of Mus musculus (Mouse).